The following is a 97-amino-acid chain: Small ribosomal subunit protein bS20 (97 aa).

This sequence belongs to the bacterial ribosomal protein bS20 family.

Binds directly to 16S ribosomal RNA. The sequence is that of Small ribosomal subunit protein bS20 from Prochlorococcus marinus subsp. pastoris (strain CCMP1986 / NIES-2087 / MED4).